Here is a 154-residue protein sequence, read N- to C-terminus: uncharacterized protein (154 aa).

This is an uncharacterized protein from Schizosaccharomyces pombe (strain 972 / ATCC 24843) (Fission yeast).